The following is a 632-amino-acid chain: Phosphatidylinositol 3,4,5-trisphosphate 3-phosphatase and protein-tyrosine-phosphatase PTEN2B (632 aa).

Residues 1–12 (METDPANSSSKS) are compositionally biased toward polar residues. The segment at 1-98 (METDPANSSS…RESPPSIFSS (98 aa)) is disordered. A compositionally biased stretch (basic and acidic residues) spans 39–48 (SAEREAHEDS). The segment covering 63–73 (MPASSTGSEPL) has biased composition (polar residues). Low complexity predominate over residues 87 to 98 (SPRESPPSIFSS). The 180-residue stretch at 189 to 368 (RRYQEGEFDL…KYYERVQNQF (180 aa)) folds into the Phosphatase tensin-type domain. Residue Cys-307 is the Phosphocysteine intermediate of the active site. The C2 tensin-type domain occupies 375-502 (ERRCMLRGFR…FHVEIVMIEP (128 aa)). The interval 504–603 (NSQPTKSKSD…SGHYNPIPNN (100 aa)) is disordered. Low complexity predominate over residues 505–527 (SQPTKSKSDSTQQQSQSSSSADS). The span at 535–549 (KDDDVFSDSDGEEEG) shows a compositional bias: acidic residues. Position 541 is a phosphoserine (Ser-541). Over residues 550-571 (NSQSYSTNEKTASSMHTTSKPH) the composition is skewed to polar residues. Residues 584 to 594 (ANRSVTSSSSS) are compositionally biased toward low complexity.

This sequence belongs to the PTEN phosphatase protein family. Expressed, at low levels, in seedlings, roots, stems, leaves, flowers and siliques. However, at protein level, not observed in older leaves, flowers and siliques.

The catalysed reaction is O-phospho-L-tyrosyl-[protein] + H2O = L-tyrosyl-[protein] + phosphate. It carries out the reaction a 1,2-diacyl-sn-glycero-3-phospho-(1D-myo-inositol-3,4,5-trisphosphate) + H2O = a 1,2-diacyl-sn-glycero-3-phospho-(1D-myo-inositol-4,5-bisphosphate) + phosphate. Protein tyrosine phosphatase that also exhibits a weak lipid phosphatase activity towards PtdIns(3)P. The polypeptide is Phosphatidylinositol 3,4,5-trisphosphate 3-phosphatase and protein-tyrosine-phosphatase PTEN2B (Arabidopsis thaliana (Mouse-ear cress)).